The following is a 92-amino-acid chain: Small ribosomal subunit protein uS19c (92 aa).

Belongs to the universal ribosomal protein uS19 family.

The protein localises to the plastid. The protein resides in the chloroplast. Its function is as follows. Protein S19 forms a complex with S13 that binds strongly to the 16S ribosomal RNA. This Nymphaea alba (White water-lily) protein is Small ribosomal subunit protein uS19c.